A 119-amino-acid chain; its full sequence is Evasin P983 (119 aa).

The first 21 residues, M1 to A21, serve as a signal peptide directing secretion. 4 disulfides stabilise this stretch: C37-C59, C55-C97, C72-C102, and C92-C111. Residues N48 and N67 are each glycosylated (N-linked (GlcNAc...) asparagine).

The protein resides in the secreted. Functionally, salivary chemokine-binding protein which binds to host chemokines CCL2, CCL3 and CCL8. This chain is Evasin P983, found in Amblyomma cajennense (Cayenne tick).